A 259-amino-acid chain; its full sequence is Dihydroorotate dehydrogenase B (NAD(+)), electron transfer subunit (259 aa).

In terms of domain architecture, FAD-binding FR-type spans Met2 to Val102. FAD contacts are provided by residues Arg53–Ser56, Leu70–Arg72, and Gly77–Thr78. Residues Cys221, Cys226, Cys229, and Cys246 each contribute to the [2Fe-2S] cluster site.

The protein belongs to the PyrK family. In terms of assembly, heterotetramer of 2 PyrK and 2 PyrD type B subunits. [2Fe-2S] cluster is required as a cofactor. The cofactor is FAD.

It functions in the pathway pyrimidine metabolism; UMP biosynthesis via de novo pathway; orotate from (S)-dihydroorotate (NAD(+) route): step 1/1. Its function is as follows. Responsible for channeling the electrons from the oxidation of dihydroorotate from the FMN redox center in the PyrD type B subunit to the ultimate electron acceptor NAD(+). This chain is Dihydroorotate dehydrogenase B (NAD(+)), electron transfer subunit, found in Bacillus cereus (strain ZK / E33L).